A 105-amino-acid chain; its full sequence is Large ribosomal subunit protein bL21 (105 aa).

The protein belongs to the bacterial ribosomal protein bL21 family. In terms of assembly, part of the 50S ribosomal subunit. Contacts protein L20.

This protein binds to 23S rRNA in the presence of protein L20. The protein is Large ribosomal subunit protein bL21 of Rhizobium etli (strain CIAT 652).